Here is a 328-residue protein sequence, read N- to C-terminus: Malate dehydrogenase (328 aa).

An NAD(+)-binding site is contributed by 16 to 22; that stretch reads GAAGQIS. Substrate-binding residues include R97 and R103. Residues N110, Q117, and 134 to 136 each bind NAD(+); that span reads VGN. Substrate is bound by residues N136 and R167. Residue H192 is the Proton acceptor of the active site.

Belongs to the LDH/MDH superfamily. MDH type 2 family.

It catalyses the reaction (S)-malate + NAD(+) = oxaloacetate + NADH + H(+). Functionally, catalyzes the reversible oxidation of malate to oxaloacetate. The polypeptide is Malate dehydrogenase (Corynebacterium glutamicum (strain R)).